The following is a 558-amino-acid chain: Podocalyxin (558 aa).

The N-terminal stretch at 1–22 (MRCALALSALLLLLSTPPLLPS) is a signal peptide. The segment covering 20–29 (LPSSPSPSPS) has biased composition (pro residues). Disordered regions lie at residues 20-50 (LPSS…PTPA), 83-210 (LGVS…DHLM), and 270-338 (SVIS…VAHE). Residues 23–461 (SPSPSPSPSQ…EEAEDRFSMP (439 aa)) lie on the Extracellular side of the membrane. 2 stretches are compositionally biased toward polar residues: residues 32–50 (QNAT…PTPA) and 83–107 (LGVS…NTTV). N-linked (GlcNAc...) asparagine glycans are attached at residues Asn33, Asn43, and Asn104. Positions 125-142 (STKSADTTTVATSTATAK) are enriched in low complexity. 3 stretches are compositionally biased toward polar residues: residues 143-173 (PNTT…LTST), 190-204 (RQPT…PTSS), and 270-302 (SVIS…TSPA). Asn144 carries an N-linked (GlcNAc...) asparagine glycan. The span at 313–324 (TMSSSPTAASTT) shows a compositional bias: low complexity. The N-linked (GlcNAc...) asparagine glycan is linked to Asn360. A helical membrane pass occupies residues 462-482 (LIITIVCMASFLLLVAALYGC). Topologically, residues 483–558 (CHQRLSQRKD…DLDEEEDTHL (76 aa)) are cytoplasmic. Thr518 is subject to Phosphothreonine. Ser529 and Ser537 each carry phosphoserine. Thr556 is modified (phosphothreonine).

Belongs to the podocalyxin family. Monomer; when associated with the membrane raft. Oligomer; when integrated in the apical membrane. Interacts (via the C-terminal PDZ-binding motif DTHL) with NHERF1 (via the PDZ domains); the interaction is not detected in glomerular epithelium cells, take place early in the secretory pathway and is necessary for its apical membrane sorting. Found in a complex with EZR, PODXL and NHERF2. Associates with the actin cytoskeleton through complex formation with EZR and NHERF2. Interacts (via the C-terminal PDZ-binding motif DTHL) with NHERF2 (via the PDZ 1 domain); interaction is detected in glomerular epithelium cells. Interacts with EZR. In terms of processing, N- and O-linked glycosylated. Sialoglycoprotein. In terms of tissue distribution, glomerular epithelium cell (podocyte).

It is found in the apical cell membrane. It localises to the cell projection. The protein resides in the lamellipodium. The protein localises to the filopodium. Its subcellular location is the ruffle. It is found in the microvillus. It localises to the membrane raft. The protein resides in the membrane. In terms of biological role, involved in the regulation of both adhesion and cell morphology and cancer progression. Functions as an anti-adhesive molecule that maintains an open filtration pathway between neighboring foot processes in the podocyte by charge repulsion. Acts as a pro-adhesive molecule, enhancing the adherence of cells to immobilized ligands, increasing the rate of migration and cell-cell contacts in an integrin-dependent manner. Induces the formation of apical actin-dependent microvilli. Involved in the formation of a preapical plasma membrane subdomain to set up initial epithelial polarization and the apical lumen formation during renal tubulogenesis. Plays a role in cancer development and aggressiveness by inducing cell migration and invasion through its interaction with the actin-binding protein EZR. Affects EZR-dependent signaling events, leading to increased activities of the MAPK and PI3K pathways in cancer cells. In Homo sapiens (Human), this protein is Podocalyxin (PODXL).